The sequence spans 100 residues: Urease subunit gamma (100 aa).

This sequence belongs to the urease gamma subunit family. In terms of assembly, heterotrimer of UreA (gamma), UreB (beta) and UreC (alpha) subunits. Three heterotrimers associate to form the active enzyme.

It localises to the cytoplasm. It carries out the reaction urea + 2 H2O + H(+) = hydrogencarbonate + 2 NH4(+). Its pathway is nitrogen metabolism; urea degradation; CO(2) and NH(3) from urea (urease route): step 1/1. The protein is Urease subunit gamma of Bordetella bronchiseptica (strain ATCC BAA-588 / NCTC 13252 / RB50) (Alcaligenes bronchisepticus).